The following is an 841-amino-acid chain: Probable inorganic carbon transporter subunit DabA 1 (841 aa).

Zn(2+) contacts are provided by C352, D354, H536, and C551.

The protein belongs to the inorganic carbon transporter (TC 9.A.2) DabA family. In terms of assembly, forms a complex with DabB. Zn(2+) is required as a cofactor.

The protein resides in the cell inner membrane. Functionally, part of an energy-coupled inorganic carbon pump. The sequence is that of Probable inorganic carbon transporter subunit DabA 1 from Bradyrhizobium sp. (strain ORS 278).